Here is an 89-residue protein sequence, read N- to C-terminus: DNA-directed RNA polymerase subunit omega (89 aa).

Belongs to the RNA polymerase subunit omega family. In terms of assembly, the RNAP catalytic core consists of 2 alpha, 1 beta, 1 beta' and 1 omega subunit. When a sigma factor is associated with the core the holoenzyme is formed, which can initiate transcription.

The enzyme catalyses RNA(n) + a ribonucleoside 5'-triphosphate = RNA(n+1) + diphosphate. Functionally, promotes RNA polymerase assembly. Latches the N- and C-terminal regions of the beta' subunit thereby facilitating its interaction with the beta and alpha subunits. In Clavibacter michiganensis subsp. michiganensis (strain NCPPB 382), this protein is DNA-directed RNA polymerase subunit omega.